Reading from the N-terminus, the 144-residue chain is Universal stress protein F (144 aa).

The protein belongs to the universal stress protein A family. As to quaternary structure, homodimer.

The polypeptide is Universal stress protein F (uspF) (Escherichia coli O157:H7).